The following is a 377-amino-acid chain: MSRGIIIIGSGFAARQLVKNIRKQDAHVPLTLIAADSMDEYNKPDLSHVISQSQRADDLTRQLAGEFAEQFNLRLFPHTWVADIDADAHVVKSQDKQWQYDKLVLATGATAFVPPIAGRELMLTLNSQQEYRACETQLRDAQRVLIVGGGLIGSELAMDFCRAGKTVTLMDNAASLLASLMPPEVSSRLQHHLTDMGVHLLLKSQLQKLEKTEAGIRATLVSQHSIEVDAVIAATGLRPETALARRAGVVVNRGVCVDSYLQTSHPDIYAIGDCAEINGQVLPFLQPIQLSAMYLAKNLLGGNAPLKLPAMLVKVKTPELPLHLAGETQRRDLSWHITAESDGMIAKGMSGEGQLRAFVVSEDRMKEAFALLKTLSV.

The protein belongs to the FAD-dependent oxidoreductase family. The cofactor is FAD.

It localises to the cytoplasm. The catalysed reaction is 2 reduced [nitric oxide reductase rubredoxin domain] + NAD(+) + H(+) = 2 oxidized [nitric oxide reductase rubredoxin domain] + NADH. It functions in the pathway nitrogen metabolism; nitric oxide reduction. One of at least two accessory proteins for anaerobic nitric oxide (NO) reductase. Reduces the rubredoxin moiety of NO reductase. The sequence is that of Nitric oxide reductase FlRd-NAD(+) reductase from Salmonella dublin (strain CT_02021853).